The primary structure comprises 1174 residues: DNA-directed RNA polymerase subunit beta' (1174 aa).

C60, C62, C75, and C78 together coordinate Zn(2+). Positions 450, 452, and 454 each coordinate Mg(2+). 4 residues coordinate Zn(2+): C795, C869, C876, and C879.

The protein belongs to the RNA polymerase beta' chain family. As to quaternary structure, the RNAP catalytic core consists of 2 alpha, 1 beta, 1 beta' and 1 omega subunit. When a sigma factor is associated with the core the holoenzyme is formed, which can initiate transcription. Mg(2+) serves as cofactor. The cofactor is Zn(2+).

It catalyses the reaction RNA(n) + a ribonucleoside 5'-triphosphate = RNA(n+1) + diphosphate. Functionally, DNA-dependent RNA polymerase catalyzes the transcription of DNA into RNA using the four ribonucleoside triphosphates as substrates. This is DNA-directed RNA polymerase subunit beta' from Clostridium kluyveri (strain ATCC 8527 / DSM 555 / NBRC 12016 / NCIMB 10680 / K1).